Here is a 480-residue protein sequence, read N- to C-terminus: Adenosylhomocysteinase (480 aa).

Residues Thr63, Asp142, and Glu203 each coordinate substrate. 204–206 contacts NAD(+); it reads TTT. Substrate is bound by residues Lys233 and Asp237. Residues Asn238, 267-272, Glu290, Asn325, 346-348, and Asn394 contribute to the NAD(+) site; these read GYGDVG and IGH.

The protein belongs to the adenosylhomocysteinase family. It depends on NAD(+) as a cofactor.

It is found in the cytoplasm. The catalysed reaction is S-adenosyl-L-homocysteine + H2O = L-homocysteine + adenosine. It participates in amino-acid biosynthesis; L-homocysteine biosynthesis; L-homocysteine from S-adenosyl-L-homocysteine: step 1/1. In terms of biological role, may play a key role in the regulation of the intracellular concentration of adenosylhomocysteine. In Xanthomonas campestris pv. campestris (strain 8004), this protein is Adenosylhomocysteinase.